The primary structure comprises 490 residues: Acetyl-coenzyme A carboxylase carboxyl transferase subunit beta, chloroplastic (490 aa).

Positions leucine 221–lysine 490 constitute a CoA carboxyltransferase N-terminal domain. The Zn(2+) site is built by cysteine 225, cysteine 228, cysteine 244, and cysteine 247. The segment at cysteine 225–cysteine 247 adopts a C4-type zinc-finger fold.

Belongs to the AccD/PCCB family. As to quaternary structure, acetyl-CoA carboxylase is a heterohexamer composed of biotin carboxyl carrier protein, biotin carboxylase and 2 subunits each of ACCase subunit alpha and ACCase plastid-coded subunit beta (accD). Requires Zn(2+) as cofactor. As to expression, expressed in leaves, ripening and mature fruit.

Its subcellular location is the plastid. The protein resides in the chloroplast stroma. It is found in the chromoplast stroma. The enzyme catalyses N(6)-carboxybiotinyl-L-lysyl-[protein] + acetyl-CoA = N(6)-biotinyl-L-lysyl-[protein] + malonyl-CoA. Its pathway is lipid metabolism; malonyl-CoA biosynthesis; malonyl-CoA from acetyl-CoA: step 1/1. In terms of biological role, component of the acetyl coenzyme A carboxylase (ACC) complex. Biotin carboxylase (BC) catalyzes the carboxylation of biotin on its carrier protein (BCCP) and then the CO(2) group is transferred by the transcarboxylase to acetyl-CoA to form malonyl-CoA. Is up-regulated upon chromoplast differentiation, presumably for fatty acid biosynthesis. In Solanum lycopersicum (Tomato), this protein is Acetyl-coenzyme A carboxylase carboxyl transferase subunit beta, chloroplastic.